The chain runs to 131 residues: Fumarate reductase subunit C (131 aa).

A run of 3 helical transmembrane segments spans residues 30 to 50 (EGTC…VFAL), 58 to 78 (AGFV…VTLI), and 109 to 129 (IVRG…AVAL).

This sequence belongs to the FrdC family. Part of an enzyme complex containing four subunits: a flavoprotein (FrdA), an iron-sulfur protein (FrdB), and two hydrophobic anchor proteins (FrdC and FrdD).

Its subcellular location is the cell inner membrane. In terms of biological role, two distinct, membrane-bound, FAD-containing enzymes are responsible for the catalysis of fumarate and succinate interconversion; fumarate reductase is used in anaerobic growth, and succinate dehydrogenase is used in aerobic growth. Anchors the catalytic components of the fumarate reductase complex to the cell inner membrane, binds quinones. The protein is Fumarate reductase subunit C of Proteus vulgaris.